The primary structure comprises 315 residues: Aspartate carbamoyltransferase catalytic subunit (315 aa).

Positions 65 and 66 each coordinate carbamoyl phosphate. Residue lysine 93 participates in L-aspartate binding. Carbamoyl phosphate contacts are provided by arginine 115, histidine 145, and glutamine 148. 2 residues coordinate L-aspartate: arginine 179 and arginine 234. Positions 275 and 276 each coordinate carbamoyl phosphate.

Belongs to the aspartate/ornithine carbamoyltransferase superfamily. ATCase family. As to quaternary structure, heterododecamer (2C3:3R2) of six catalytic PyrB chains organized as two trimers (C3), and six regulatory PyrI chains organized as three dimers (R2).

It catalyses the reaction carbamoyl phosphate + L-aspartate = N-carbamoyl-L-aspartate + phosphate + H(+). It participates in pyrimidine metabolism; UMP biosynthesis via de novo pathway; (S)-dihydroorotate from bicarbonate: step 2/3. Functionally, catalyzes the condensation of carbamoyl phosphate and aspartate to form carbamoyl aspartate and inorganic phosphate, the committed step in the de novo pyrimidine nucleotide biosynthesis pathway. This is Aspartate carbamoyltransferase catalytic subunit from Xanthomonas campestris pv. campestris (strain 8004).